A 179-amino-acid chain; its full sequence is Sec-independent protein translocase protein TatB (179 aa).

A helical membrane pass occupies residues 2–22; the sequence is FNGVGWGEVVVLLLIGLFVFG. Residues 98 to 109 are compositionally biased toward low complexity; the sequence is LLGDDPPAAPSL. The tract at residues 98–179 is disordered; it reads LLGDDPPAAP…TEVPFDSDAT (82 aa).

Belongs to the TatB family. In terms of assembly, the Tat system comprises two distinct complexes: a TatABC complex, containing multiple copies of TatA, TatB and TatC subunits, and a separate TatA complex, containing only TatA subunits. Substrates initially bind to the TatABC complex, which probably triggers association of the separate TatA complex to form the active translocon.

It localises to the cell membrane. In terms of biological role, part of the twin-arginine translocation (Tat) system that transports large folded proteins containing a characteristic twin-arginine motif in their signal peptide across membranes. Together with TatC, TatB is part of a receptor directly interacting with Tat signal peptides. TatB may form an oligomeric binding site that transiently accommodates folded Tat precursor proteins before their translocation. This chain is Sec-independent protein translocase protein TatB, found in Frankia casuarinae (strain DSM 45818 / CECT 9043 / HFP020203 / CcI3).